Reading from the N-terminus, the 364-residue chain is UDP-N-acetylglucosamine--N-acetylmuramyl-(pentapeptide) pyrophosphoryl-undecaprenol N-acetylglucosamine transferase (364 aa).

Residues 10–12 (TGG), Asn-128, Arg-170, Ser-199, Ile-250, and Gln-295 contribute to the UDP-N-acetyl-alpha-D-glucosamine site.

Belongs to the glycosyltransferase 28 family. MurG subfamily.

It localises to the cell inner membrane. The enzyme catalyses di-trans,octa-cis-undecaprenyl diphospho-N-acetyl-alpha-D-muramoyl-L-alanyl-D-glutamyl-meso-2,6-diaminopimeloyl-D-alanyl-D-alanine + UDP-N-acetyl-alpha-D-glucosamine = di-trans,octa-cis-undecaprenyl diphospho-[N-acetyl-alpha-D-glucosaminyl-(1-&gt;4)]-N-acetyl-alpha-D-muramoyl-L-alanyl-D-glutamyl-meso-2,6-diaminopimeloyl-D-alanyl-D-alanine + UDP + H(+). The protein operates within cell wall biogenesis; peptidoglycan biosynthesis. Functionally, cell wall formation. Catalyzes the transfer of a GlcNAc subunit on undecaprenyl-pyrophosphoryl-MurNAc-pentapeptide (lipid intermediate I) to form undecaprenyl-pyrophosphoryl-MurNAc-(pentapeptide)GlcNAc (lipid intermediate II). This Chlorobaculum parvum (strain DSM 263 / NCIMB 8327) (Chlorobium vibrioforme subsp. thiosulfatophilum) protein is UDP-N-acetylglucosamine--N-acetylmuramyl-(pentapeptide) pyrophosphoryl-undecaprenol N-acetylglucosamine transferase.